The chain runs to 158 residues: MDSGIYETPINYKKSNVSAVSVNNTIFVTGGLFINNSNSTIVVNNMEKLDIYKDKQWSIIEMPMARVYHGIDSTFGMLYFAGGLSVTEQYGNLEKNNEISCYNPRTNKWFDISYTIYKISISSLCKLNNVFYVFSKDIGYVEKYDGLPAIKALSTSPY.

2 Kelch repeats span residues 25–76 (TIFV…STFG) and 77–129 (MLYF…KLNN).

This sequence belongs to the poxviruses Kelch family.

The sequence is that of Kelch repeat protein B10 from Vaccinia virus (strain Ankara) (VACV).